Consider the following 808-residue polypeptide: Ribosome biogenesis protein BOP1 homolog (808 aa).

Composition is skewed to low complexity over residues 1 to 25 (MTSP…LTPC) and 33 to 50 (ATSS…SSFD). Positions 1–55 (MTSPKGKPSPKRSAPAPATAALTPCAEERTEGATSSASASASSHISSSFDSPRDD) are disordered. WD repeat units follow at residues 430 to 469 (GHTA…LMKR), 640 to 680 (KFSE…RRFK), 682 to 720 (SGGV…KPYK), 724 to 766 (SHKG…DYNK), and 777 to 808 (KHQR…AWTE).

It belongs to the WD repeat BOP1/ERB1 family.

Its subcellular location is the nucleus. The protein resides in the nucleolus. It localises to the nucleoplasm. In terms of biological role, required for maturation of ribosomal RNAs and formation of the large ribosomal subunit. This chain is Ribosome biogenesis protein BOP1 homolog, found in Leishmania major.